Here is a 216-residue protein sequence, read N- to C-terminus: Leucyl/phenylalanyl-tRNA--protein transferase (216 aa).

The protein belongs to the L/F-transferase family.

The protein resides in the cytoplasm. It catalyses the reaction N-terminal L-lysyl-[protein] + L-leucyl-tRNA(Leu) = N-terminal L-leucyl-L-lysyl-[protein] + tRNA(Leu) + H(+). The catalysed reaction is N-terminal L-arginyl-[protein] + L-leucyl-tRNA(Leu) = N-terminal L-leucyl-L-arginyl-[protein] + tRNA(Leu) + H(+). The enzyme catalyses L-phenylalanyl-tRNA(Phe) + an N-terminal L-alpha-aminoacyl-[protein] = an N-terminal L-phenylalanyl-L-alpha-aminoacyl-[protein] + tRNA(Phe). Its function is as follows. Functions in the N-end rule pathway of protein degradation where it conjugates Leu, Phe and, less efficiently, Met from aminoacyl-tRNAs to the N-termini of proteins containing an N-terminal arginine or lysine. The sequence is that of Leucyl/phenylalanyl-tRNA--protein transferase from Maricaulis maris (strain MCS10) (Caulobacter maris).